Reading from the N-terminus, the 112-residue chain is Histone H2B (112 aa).

The tract at residues 1–24 is disordered; that stretch reads MATPKSSSANRKKGGKKSHRKPKR. Over residues 10 to 24 the composition is skewed to basic residues; the sequence is NRKKGGKKSHRKPKR.

Belongs to the histone H2B family. In terms of assembly, the nucleosome is a histone octamer containing two molecules each of H2A, H2B, H3 and H4 assembled in one H3-H4 heterotetramer and two H2A-H2B heterodimers. The octamer wraps approximately 147 bp of DNA.

It is found in the nucleus. The protein localises to the chromosome. Functionally, core component of nucleosome. Nucleosomes wrap and compact DNA into chromatin, limiting DNA accessibility to the cellular machineries which require DNA as a template. Histones thereby play a central role in transcription regulation, DNA repair, DNA replication and chromosomal stability. DNA accessibility is regulated via a complex set of post-translational modifications of histones, also called histone code, and nucleosome remodeling. In Trypanosoma cruzi, this protein is Histone H2B.